Here is a 154-residue protein sequence, read N- to C-terminus: MAAARGLSLTAATQKAVTPWPRGRLLAASLGPQARREASSSSPEAGEGQIRLTDSCVQRLLEITEGSEFLRLQVEGGGCSGFQYKFSLDTVINPDDRVFEQGGARVVVDSDSLAFVKGAQVDFSQELIRSSFQVLNNPQAQQGCSCGSSFSIKL.

The transit peptide at 1 to 8 directs the protein to the mitochondrion; the sequence is MAAARGLS. Fe cation-binding residues include cysteine 79, cysteine 144, and cysteine 146.

The protein belongs to the HesB/IscA family. As to quaternary structure, heterotetramer; forms a dimer of dimers with IBA57. Interacts with [2Fe-2S]-ISCA2 forming the heterodimer [2Fe- 2S]-ISCA2-IBA57 complex; [2Fe-2S] cluster binding is absolutely required to promote the complex formation.

Its subcellular location is the mitochondrion. In terms of biological role, involved in the maturation of mitochondrial 4Fe-4S proteins functioning late in the iron-sulfur cluster assembly pathway. May be involved in the binding of an intermediate of Fe/S cluster assembly. The protein is Iron-sulfur cluster assembly 2 homolog, mitochondrial (ISCA2) of Pongo abelii (Sumatran orangutan).